Reading from the N-terminus, the 63-residue chain is Large ribosomal subunit protein bL28 (63 aa).

The protein belongs to the bacterial ribosomal protein bL28 family.

In Hydrogenobaculum sp. (strain Y04AAS1), this protein is Large ribosomal subunit protein bL28.